The primary structure comprises 590 residues: Aspartate--tRNA ligase (590 aa).

Glu172 is an L-aspartate binding site. An aspartate region spans residues 196-199; sequence QLFK. Arg218 is an L-aspartate binding site. Residues 218 to 220 and Gln227 each bind ATP; that span reads RDE. His449 provides a ligand contact to L-aspartate. Glu483 contributes to the ATP binding site. Arg490 lines the L-aspartate pocket. 535–538 serves as a coordination point for ATP; that stretch reads GLDR.

Belongs to the class-II aminoacyl-tRNA synthetase family. Type 1 subfamily. In terms of assembly, homodimer.

It is found in the cytoplasm. The enzyme catalyses tRNA(Asp) + L-aspartate + ATP = L-aspartyl-tRNA(Asp) + AMP + diphosphate. Catalyzes the attachment of L-aspartate to tRNA(Asp) in a two-step reaction: L-aspartate is first activated by ATP to form Asp-AMP and then transferred to the acceptor end of tRNA(Asp). The polypeptide is Aspartate--tRNA ligase (Mannheimia succiniciproducens (strain KCTC 0769BP / MBEL55E)).